The following is a 132-amino-acid chain: Small ribosomal subunit protein uS8 (132 aa).

It belongs to the universal ribosomal protein uS8 family. In terms of assembly, part of the 30S ribosomal subunit. Contacts proteins S5 and S12.

Functionally, one of the primary rRNA binding proteins, it binds directly to 16S rRNA central domain where it helps coordinate assembly of the platform of the 30S subunit. The sequence is that of Small ribosomal subunit protein uS8 from Anaeromyxobacter sp. (strain Fw109-5).